A 642-amino-acid chain; its full sequence is Wall-associated receptor kinase-like 6 (642 aa).

Positions 1 to 28 are cleaved as a signal peptide; it reads MKKTKTYQVFCIAALSVLTLQLINGSSA. At 29–357 the chain is on the extracellular side; it reads ATPPPPNSNS…PKITKPEKAS (329 aa). Residues N37, N72, N95, N137, N216, N240, and N276 are each glycosylated (N-linked (GlcNAc...) asparagine). Residues 289-346 form an atypical EGF-like region; it reads CSCEYDYFSGMSYRICYCNYGYTGNPYLRHGCIDIDECEGHHNCGEGTCVNMPGTHSC. 3 disulfides stabilise this stretch: C291/C304, C326/C337, and C332/C346. Residues 358–378 traverse the membrane as a helical segment; sequence VLQGVLISLGVLLFVLGILGL. Residues 379–642 lie on the Cytoplasmic side of the membrane; that stretch reads YKFIKKRTRI…KPLSRKRIGN (264 aa). A Protein kinase domain is found at 432–642; sequence FSMNRVLGQG…KPLSRKRIGN (211 aa). ATP is bound by residues 438-446 and K460; that span reads LGQGGQGTV. At Y505 the chain carries Phosphotyrosine. The active-site Proton acceptor is D559. Residues T593 and T598 each carry the phosphothreonine modification. Phosphotyrosine is present on Y606.

It belongs to the protein kinase superfamily. Ser/Thr protein kinase family. In terms of tissue distribution, slightly expressed in the whole plant.

The protein localises to the membrane. The enzyme catalyses L-seryl-[protein] + ATP = O-phospho-L-seryl-[protein] + ADP + H(+). It carries out the reaction L-threonyl-[protein] + ATP = O-phospho-L-threonyl-[protein] + ADP + H(+). Functionally, serine/threonine-protein kinase that may function as a signaling receptor of extracellular matrix component. This Arabidopsis thaliana (Mouse-ear cress) protein is Wall-associated receptor kinase-like 6 (WAKL6).